The sequence spans 218 residues: Putative receptor like protein 25 (218 aa).

Residues 1–178 are Extracellular-facing; that stretch reads MIYTKNAYGS…QEDAKVLNWK (178 aa). 4 LRR repeats span residues 34 to 58, 59 to 82, 83 to 106, and 108 to 131; these read LTLY…IGLL, KALI…MANL, IELE…LKTL, and FLGY…QITG. Residue asparagine 65 is glycosylated (N-linked (GlcNAc...) asparagine). An N-linked (GlcNAc...) asparagine glycan is attached at asparagine 113. A helical transmembrane segment spans residues 179 to 199; it reads AVATGYGPGVFFGLAIAQIIA. Over 200 to 218 the chain is Cytoplasmic; the sequence is SYKPEWLVKIIGPNKRRNH.

It belongs to the RLP family.

The protein localises to the cell membrane. This is Putative receptor like protein 25 from Arabidopsis thaliana (Mouse-ear cress).